The sequence spans 245 residues: Probable transcriptional regulatory protein NSE_0641 (245 aa).

Residues Met-1–Ala-22 are disordered.

It belongs to the TACO1 family.

Its subcellular location is the cytoplasm. The polypeptide is Probable transcriptional regulatory protein NSE_0641 (Neorickettsia sennetsu (strain ATCC VR-367 / Miyayama) (Ehrlichia sennetsu)).